Here is a 91-residue protein sequence, read N- to C-terminus: Small ribosomal subunit protein bS20 (91 aa).

It belongs to the bacterial ribosomal protein bS20 family.

Binds directly to 16S ribosomal RNA. In Caulobacter vibrioides (strain ATCC 19089 / CIP 103742 / CB 15) (Caulobacter crescentus), this protein is Small ribosomal subunit protein bS20.